Here is a 420-residue protein sequence, read N- to C-terminus: Mitochondrial chaperone BCS1 (420 aa).

At 1-15 (MTLSDFIGALKDNPY) the chain is on the mitochondrial intermembrane side. A helical transmembrane segment spans residues 16 to 32 (FGAGFGLVGVGTALAVA). Over 33–420 (RKGAQVGMIF…AIKNIAEIKD (388 aa)) the chain is Mitochondrial matrix. Position 230-237 (230-237 (GPPGCGKS)) interacts with ATP.

Belongs to the AAA ATPase family. BCS1 subfamily.

The protein resides in the mitochondrion inner membrane. It carries out the reaction ATP + H2O = ADP + phosphate + H(+). Chaperone necessary for the incorporation of Rieske iron-sulfur protein uqcrfs1 into the mitochondrial respiratory chain complex III. The polypeptide is Mitochondrial chaperone BCS1 (bcs1l) (Danio rerio (Zebrafish)).